The following is a 78-amino-acid chain: uncharacterized protein (78 aa).

The next 2 membrane-spanning stretches (helical) occupy residues 25–45 (IITACSHVICVLGIIVGDEVV) and 50–70 (KCADIFMIFLVINEPFLFVFV).

The protein resides in the membrane. This is an uncharacterized protein from Saccharomyces cerevisiae (strain ATCC 204508 / S288c) (Baker's yeast).